A 351-amino-acid chain; its full sequence is Anthranilate phosphoribosyltransferase (351 aa).

Residues glycine 85, glycine 88–aspartate 89, serine 93, asparagine 95–threonine 98, lysine 113–serine 121, and threonine 125 contribute to the 5-phospho-alpha-D-ribose 1-diphosphate site. Glycine 85 lines the anthranilate pocket. A Mg(2+)-binding site is contributed by serine 97. Residue asparagine 116 participates in anthranilate binding. Arginine 171 contributes to the anthranilate binding site. Aspartate 229 and glutamate 230 together coordinate Mg(2+).

It belongs to the anthranilate phosphoribosyltransferase family. As to quaternary structure, homodimer. Mg(2+) serves as cofactor.

The catalysed reaction is N-(5-phospho-beta-D-ribosyl)anthranilate + diphosphate = 5-phospho-alpha-D-ribose 1-diphosphate + anthranilate. Its pathway is amino-acid biosynthesis; L-tryptophan biosynthesis; L-tryptophan from chorismate: step 2/5. Catalyzes the transfer of the phosphoribosyl group of 5-phosphorylribose-1-pyrophosphate (PRPP) to anthranilate to yield N-(5'-phosphoribosyl)-anthranilate (PRA). This Saccharopolyspora erythraea (strain ATCC 11635 / DSM 40517 / JCM 4748 / NBRC 13426 / NCIMB 8594 / NRRL 2338) protein is Anthranilate phosphoribosyltransferase.